The primary structure comprises 133 residues: Gamma-crystallin 1 (133 aa).

Residues 1-41 enclose the Beta/gamma crystallin 'Greek key' 2 domain; it reads WMLYEHPNYTGHQYFLRRGEYPDFQQWMGLNDSIRSCRVIP. The segment at 42 to 46 is connecting peptide; sequence QHRGS. Beta/gamma crystallin 'Greek key' domains are found at residues 47–87 and 88–130; these read FRLR…NVLE and GHWI…RRVQ.

It belongs to the beta/gamma-crystallin family. As to quaternary structure, monomer.

Its function is as follows. Crystallins are the dominant structural components of the vertebrate eye lens. The sequence is that of Gamma-crystallin 1 from Rana temporaria (European common frog).